We begin with the raw amino-acid sequence, 728 residues long: Catalase-peroxidase 1 (728 aa).

The tryptophyl-tyrosyl-methioninium (Trp-Tyr) (with M-244) cross-link spans 91–218 (WHSAGTYRTA…LAAVQMGLIY (128 aa)). His92 (proton acceptor) is an active-site residue. Positions 218 to 244 (YVNPEGPDGNPDPVAAARDIRDTFARM) form a cross-link, tryptophyl-tyrosyl-methioninium (Tyr-Met) (with W-91). His259 is a binding site for heme b.

Belongs to the peroxidase family. Peroxidase/catalase subfamily. Homodimer or homotetramer. Requires heme b as cofactor. Formation of the three residue Trp-Tyr-Met cross-link is important for the catalase, but not the peroxidase activity of the enzyme.

The catalysed reaction is H2O2 + AH2 = A + 2 H2O. It catalyses the reaction 2 H2O2 = O2 + 2 H2O. Its function is as follows. Bifunctional enzyme with both catalase and broad-spectrum peroxidase activity. The chain is Catalase-peroxidase 1 from Burkholderia ambifaria (strain MC40-6).